Here is a 148-residue protein sequence, read N- to C-terminus: Stathmin (148 aa).

An SLD domain is found at 4–145 (SDIQVKELEK…NKEGKDPGEA (142 aa)). Position 16 is a phosphoserine; by PKA (Ser16). At Ser38 the chain carries Phosphoserine; by CDK1. Residues 41–140 (KKKDLSLEEI…EEVRKNKEGK (100 aa)) are a coiled coil. At Ser63 the chain carries Phosphoserine; by PKA. A disordered region spans residues 122–148 (RLREKDKHIEEVRKNKEGKDPGEAETN).

The protein belongs to the stathmin family. Binds to two alpha/beta-tubulin heterodimers. In terms of processing, many different phosphorylated forms are observed depending on specific combinations among the sites which can be phosphorylated. MAPK is responsible for the phosphorylation of stathmin in response to NGF.

It is found in the cytoplasm. The protein resides in the cytoskeleton. In terms of biological role, involved in the regulation of the microtubule (MT) filament system by destabilizing microtubules. It prevents assembly and promotes disassembly of microtubules. The polypeptide is Stathmin (STMN1) (Gallus gallus (Chicken)).